The following is a 193-amino-acid chain: Acyl carrier protein phosphodiesterase (193 aa).

Belongs to the AcpH family.

It catalyses the reaction holo-[ACP] + H2O = apo-[ACP] + (R)-4'-phosphopantetheine + H(+). In terms of biological role, converts holo-ACP to apo-ACP by hydrolytic cleavage of the phosphopantetheine prosthetic group from ACP. The chain is Acyl carrier protein phosphodiesterase from Yersinia enterocolitica serotype O:8 / biotype 1B (strain NCTC 13174 / 8081).